A 381-amino-acid polypeptide reads, in one-letter code: Ribosomal lysine N-methyltransferase set11 (381 aa).

The SET domain maps to proline 23–glycine 224. Tyrosine 223 contributes to the S-adenosyl-L-methionine binding site.

The protein belongs to the class V-like SAM-binding methyltransferase superfamily. RKM2 family.

Its subcellular location is the cytoplasm. The protein localises to the nucleus. The protein resides in the nucleolus. Functionally, S-adenosyl-L-methionine-dependent protein-lysine N-methyltransferase that trimethylates 60S ribosomal protein L12 (rpl1201 and rpl1202) at 'Lys-4' and may dimethylate L12 also at 'Lys-40' and 'Lys-41'. Overexpression causes a severe growth defect. Has a role in meiosis. The sequence is that of Ribosomal lysine N-methyltransferase set11 (set11) from Schizosaccharomyces pombe (strain 972 / ATCC 24843) (Fission yeast).